We begin with the raw amino-acid sequence, 618 residues long: UvrABC system protein C (618 aa).

A GIY-YIG domain is found at 15–93 (RTPGVYLMKD…IKEHHPRYNI (79 aa)). Positions 203–238 (NNLLRELRERMKMAAEQMNYEEAAFLRDRIRAIEET) constitute a UVR domain.

This sequence belongs to the UvrC family. As to quaternary structure, interacts with UvrB in an incision complex.

Its subcellular location is the cytoplasm. Functionally, the UvrABC repair system catalyzes the recognition and processing of DNA lesions. UvrC both incises the 5' and 3' sides of the lesion. The N-terminal half is responsible for the 3' incision and the C-terminal half is responsible for the 5' incision. In Syntrophus aciditrophicus (strain SB), this protein is UvrABC system protein C.